Here is a 336-residue protein sequence, read N- to C-terminus: MIRVGIVGASGYVGLELTRILLKHPEVEKLYLFSDHFEDSWIFESEKIFVSDRSSYTELYKNLDVVFFALGSGETLKFLNDNQIPERFIDMSADFRFKNPGEYERVYGIKHSMPELLEKVVYGLPEVFREKIRDAKYIANPGCYPTASLLGLFPLIKNNLTYGNAIIDAKSGISGAGRKPTDKSIYGNIAENYQAYSILNHRHQPEIENIVKEMGYLRVLFIPQLIPVFRGIFASIYVPLREDITSDELYLLFKEVYKDEYFIKILPPSCSPEIKKVRGTNWAVISAQVDKNTRNAVIFVAIDNLIKGAAGQAVQNMNIMFGYDENLGLDFLPLYP.

The active site involves Cys143.

It belongs to the NAGSA dehydrogenase family. Type 1 subfamily.

The protein localises to the cytoplasm. It catalyses the reaction N-acetyl-L-glutamate 5-semialdehyde + phosphate + NADP(+) = N-acetyl-L-glutamyl 5-phosphate + NADPH + H(+). It participates in amino-acid biosynthesis; L-arginine biosynthesis; N(2)-acetyl-L-ornithine from L-glutamate: step 3/4. In terms of biological role, catalyzes the NADPH-dependent reduction of N-acetyl-5-glutamyl phosphate to yield N-acetyl-L-glutamate 5-semialdehyde. The chain is N-acetyl-gamma-glutamyl-phosphate reductase from Dictyoglomus thermophilum (strain ATCC 35947 / DSM 3960 / H-6-12).